A 423-amino-acid chain; its full sequence is Haloacid dehalogenase-like hydrolase domain-containing 5 (423 aa).

A signal peptide spans 1 to 23; sequence MAAWGCVAALGAARGLCWRAARA.

The protein belongs to the HAD-like hydrolase superfamily. As to expression, widely expressed.

The chain is Haloacid dehalogenase-like hydrolase domain-containing 5 from Homo sapiens (Human).